Here is a 66-residue protein sequence, read N- to C-terminus: Stress-induced protein KIN1 (66 aa).

A compositionally biased stretch (polar residues) spans 1-13 (MSETNKNAFQAGQ). The disordered stretch occupies residues 1–52 (MSETNKNAFQAGQTAGKAEEKSNVLLDKAKDAAAGAGAGAQQAGKSVSDAAA). The span at 17–31 (KAEEKSNVLLDKAKD) shows a compositional bias: basic and acidic residues. 2 repeats span residues 31–35 (DAAAG) and 49–53 (DAAAG). Low complexity predominate over residues 32–45 (AAAGAGAGAQQAGK).

The sequence is that of Stress-induced protein KIN1 (KIN1) from Arabidopsis thaliana (Mouse-ear cress).